Reading from the N-terminus, the 1235-residue chain is Gem-associated protein 5 (1235 aa).

A WD 1 repeat occupies 55–102 (STRINILALDVSPMWGLGNGGPTKPFAIVGDDLSVQVWDCALGEAVIG). The disordered stretch occupies residues 227–263 (NNLALSAEEWRSRNGGQEEKPKTKPPPLTKSKAAESD). Over residues 234 to 248 (EEWRSRNGGQEEKPK) the composition is skewed to basic and acidic residues. Ser289, Ser290, Ser351, and Ser354 each carry phosphoserine. The disordered stretch occupies residues 340–368 (DCEPTKPTGPLSDASTISNKNDASDSTEG). Residues 352 to 368 (DASTISNKNDASDSTEG) are compositionally biased toward polar residues. Thr355 bears the Phosphothreonine mark. Ser357 carries the post-translational modification Phosphoserine. Phosphothreonine is present on Thr411. 7 WD repeats span residues 428 to 469 (ISAE…HAGK), 475 to 512 (KTAGKLNNVYWLNNHVIVSLSRHQLFFWSVEFERKMLR), 565 to 605 (TVAF…TSCL), 611 to 650 (YVSSNVYCLAWSPNCLELAFGTFDGTVGILDVERMKVKTH), 690 to 730 (TIVN…EKSW), 739 to 779 (LFAR…RNWK), and 788 to 828 (TEKA…KPPL). An LXXLL motif motif is present at residues 443–447 (LETLL). Positions 963 to 980 (KEQNNRSAKECPKCKEQS) are enriched in basic and acidic residues. The segment at 963-983 (KEQNNRSAKECPKCKEQSPDS) is disordered.

Component of the core survival motor neuron (SMN) complex composed of Smn, Gem2, Gem3, rig/Gem5 and one of 3 almost identical Gem4 paralogs encoded by Glos/Gem4a, Gem4b or Gem4c. Interacts with nuclear receptors EcR, svp (seven up), usp (ultraspiracle), Hr39 and Hr3. Expressed in the brain and salivary glands of early and late second instar larvae. Expressed in nurse cells and oocytes.

Its subcellular location is the nucleus. The protein localises to the cytoplasm. It localises to the U-body. The protein resides in the gem. Component of the survival motor neuron (SMN) complex that catalyzes the assembly of small nuclear ribonucleoproteins (snRNPs), the building blocks of the spliceosome, and thereby plays an important role in the splicing of cellular pre-mRNAs. Nuclear receptor cofactor for the ecdysone-regulated processes of molting and puparium formation. Acts downstream from ecdysone biosynthesis and release to control the expression of specific ecdysone-regulated genes such as Eip74EF (E74). Essential in muscle and neuronal tissues for motor function, including climbing ability and flight. In Drosophila melanogaster (Fruit fly), this protein is Gem-associated protein 5.